We begin with the raw amino-acid sequence, 428 residues long: Elongation factor 1-alpha (428 aa).

The 213-residue stretch at 5-217 folds into the tr-type G domain; that stretch reads KPHVNIVFIG…DQIPEPEKPT (213 aa). A G1 region spans residues 14–21; sequence GHVDHGKS. GTP is bound at residue 14–21; that stretch reads GHVDHGKS. Ser21 lines the Mg(2+) pocket. The interval 68 to 72 is G2; the sequence is GITID. Residues 89–92 are G3; it reads DAPG. Residues 89–93 and 144–147 contribute to the GTP site; these read DAPGH and NKMD. A G4 region spans residues 144–147; it reads NKMD. The tract at residues 181-183 is G5; it reads SAW.

This sequence belongs to the TRAFAC class translation factor GTPase superfamily. Classic translation factor GTPase family. EF-Tu/EF-1A subfamily.

It is found in the cytoplasm. The enzyme catalyses GTP + H2O = GDP + phosphate + H(+). Its function is as follows. GTP hydrolase that promotes the GTP-dependent binding of aminoacyl-tRNA to the A-site of ribosomes during protein biosynthesis. The polypeptide is Elongation factor 1-alpha (Thermococcus sibiricus (strain DSM 12597 / MM 739)).